Here is a 435-residue protein sequence, read N- to C-terminus: tRNA modification GTPase MnmE (435 aa).

Residues R20, E77, and K117 each coordinate (6S)-5-formyl-5,6,7,8-tetrahydrofolate. The TrmE-type G domain occupies 214–359 (GFKIVIVGAP…FMKELESFCL (146 aa)). GTP-binding positions include 224-229 (NSGKSS), 243-249 (TEEAGTT), and 268-271 (DTAG). The Mg(2+) site is built by S228 and T249. K435 contributes to the (6S)-5-formyl-5,6,7,8-tetrahydrofolate binding site.

This sequence belongs to the TRAFAC class TrmE-Era-EngA-EngB-Septin-like GTPase superfamily. TrmE GTPase family. In terms of assembly, homodimer. Heterotetramer of two MnmE and two MnmG subunits. K(+) is required as a cofactor.

It is found in the cytoplasm. In terms of biological role, exhibits a very high intrinsic GTPase hydrolysis rate. Involved in the addition of a carboxymethylaminomethyl (cmnm) group at the wobble position (U34) of certain tRNAs, forming tRNA-cmnm(5)s(2)U34. The polypeptide is tRNA modification GTPase MnmE (Bartonella henselae (strain ATCC 49882 / DSM 28221 / CCUG 30454 / Houston 1) (Rochalimaea henselae)).